We begin with the raw amino-acid sequence, 121 residues long: Large ribosomal subunit protein bL12 (121 aa).

It belongs to the bacterial ribosomal protein bL12 family. As to quaternary structure, homodimer. Part of the ribosomal stalk of the 50S ribosomal subunit. Forms a multimeric L10(L12)X complex, where L10 forms an elongated spine to which 2 to 4 L12 dimers bind in a sequential fashion. Binds GTP-bound translation factors.

Functionally, forms part of the ribosomal stalk which helps the ribosome interact with GTP-bound translation factors. Is thus essential for accurate translation. This is Large ribosomal subunit protein bL12 from Serratia proteamaculans (strain 568).